The primary structure comprises 907 residues: Protein translocase subunit SecA (907 aa).

Residues Gln87, 105-109, and Asp510 each bind ATP; that span reads GEGKT. Residues Cys892, Cys894, Cys903, and His904 each coordinate Zn(2+).

This sequence belongs to the SecA family. Monomer and homodimer. Part of the essential Sec protein translocation apparatus which comprises SecA, SecYEG and auxiliary proteins SecDF-YajC and YidC. It depends on Zn(2+) as a cofactor.

It is found in the cell inner membrane. The protein localises to the cytoplasm. It catalyses the reaction ATP + H2O + cellular proteinSide 1 = ADP + phosphate + cellular proteinSide 2.. Its function is as follows. Part of the Sec protein translocase complex. Interacts with the SecYEG preprotein conducting channel. Has a central role in coupling the hydrolysis of ATP to the transfer of proteins into and across the cell membrane, serving both as a receptor for the preprotein-SecB complex and as an ATP-driven molecular motor driving the stepwise translocation of polypeptide chains across the membrane. This is Protein translocase subunit SecA from Acinetobacter baumannii (strain ATCC 17978 / DSM 105126 / CIP 53.77 / LMG 1025 / NCDC KC755 / 5377).